The sequence spans 445 residues: MSNRKYFGTDGIRGRVGNAPITPDFVLKLGWAAGKVLARHGSRKIIIGKDTRISGYMLESALEAGLAAAGLSASFTGPMPTPAVAYLTRTFRAEAGIVISASHNPFYDNGIKFFSIDGTKLPDDVEEAIEAEMEKEITCVDSAELGKASRIVDAAGRYIEFCKGTFPNELSLNGLKVVVDCANGATYHIAPNVLRELGATVIAIGCEPNGVNINEEVGATDVRALQARVLVEKADLGIALDGDGDRVIMVDHEGNKVDGDQIMYIIAREGLRQGQLRGGAVGTLMSNMGLELALKQLGIPFARAKVGDRYVLEKLQEKGWRIGAENSGHVILLDKTTTGDGIVAGLQVLAAMVRNHMSLHDLCSGMKMFPQILVNVRYTAGSGDPLENDAVKAVTADVEATLGNRGRVLLRKSGTEPLIRVMVEGEDEAQVTAFAHRIADAVKAV.

The Phosphoserine intermediate role is filled by serine 102. The Mg(2+) site is built by serine 102, aspartate 241, aspartate 243, and aspartate 245. Serine 102 is modified (phosphoserine).

This sequence belongs to the phosphohexose mutase family. Requires Mg(2+) as cofactor. Activated by phosphorylation.

It carries out the reaction alpha-D-glucosamine 1-phosphate = D-glucosamine 6-phosphate. Catalyzes the conversion of glucosamine-6-phosphate to glucosamine-1-phosphate. In Salmonella paratyphi A (strain ATCC 9150 / SARB42), this protein is Phosphoglucosamine mutase.